Here is a 170-residue protein sequence, read N- to C-terminus: Myosin regulatory light chain 1 (170 aa).

The span at 1 to 13 (MSKAAKKKSSKKR) shows a compositional bias: basic residues. Positions 1–22 (MSKAAKKKSSKKRSGSEAAQFD) are disordered. EF-hand domains follow at residues 24–59 (KTIQ…MGQI) and 93–128 (DPEA…KRGE). 4 residues coordinate Ca(2+): aspartate 37, asparagine 39, aspartate 41, and aspartate 48.

In terms of assembly, myosin is a hexamer of 2 heavy chains and 4 light chains (two regulatory light chains and two essential light chains).

The polypeptide is Myosin regulatory light chain 1 (mlc-1) (Caenorhabditis elegans).